The chain runs to 280 residues: 4-diphosphocytidyl-2-C-methyl-D-erythritol kinase (280 aa).

Lys11 is an active-site residue. 95–105 (PVGAGLGGGSS) contacts ATP. Residue Asp137 is part of the active site.

It belongs to the GHMP kinase family. IspE subfamily.

It catalyses the reaction 4-CDP-2-C-methyl-D-erythritol + ATP = 4-CDP-2-C-methyl-D-erythritol 2-phosphate + ADP + H(+). Its pathway is isoprenoid biosynthesis; isopentenyl diphosphate biosynthesis via DXP pathway; isopentenyl diphosphate from 1-deoxy-D-xylulose 5-phosphate: step 3/6. Its function is as follows. Catalyzes the phosphorylation of the position 2 hydroxy group of 4-diphosphocytidyl-2C-methyl-D-erythritol. This Citrifermentans bemidjiense (strain ATCC BAA-1014 / DSM 16622 / JCM 12645 / Bem) (Geobacter bemidjiensis) protein is 4-diphosphocytidyl-2-C-methyl-D-erythritol kinase.